The following is a 755-amino-acid chain: Elongation factor G, mitochondrial (755 aa).

The transit peptide at 1–38 directs the protein to the mitochondrion; it reads MFKRVGLIAGIAGPVAGSSRFSAVSFSKRAFSASSKRC. The tr-type G domain occupies 63 to 344; it reads KKLRNIGISA…AIVEYLPNPS (282 aa). GTP contacts are provided by residues 72 to 79, 143 to 147, and 197 to 200; these read AHIDSGKT, DTPGH, and NKMD.

The protein belongs to the TRAFAC class translation factor GTPase superfamily. Classic translation factor GTPase family. EF-G/EF-2 subfamily.

Its subcellular location is the mitochondrion. The protein operates within protein biosynthesis; polypeptide chain elongation. Its function is as follows. Mitochondrial GTPase that catalyzes the GTP-dependent ribosomal translocation step during translation elongation. During this step, the ribosome changes from the pre-translocational (PRE) to the post-translocational (POST) state as the newly formed A-site-bound peptidyl-tRNA and P-site-bound deacylated tRNA move to the P and E sites, respectively. Catalyzes the coordinated movement of the two tRNA molecules, the mRNA and conformational changes in the ribosome. The protein is Elongation factor G, mitochondrial of Kluyveromyces lactis (strain ATCC 8585 / CBS 2359 / DSM 70799 / NBRC 1267 / NRRL Y-1140 / WM37) (Yeast).